A 530-amino-acid chain; its full sequence is Probable histone-arginine methyltransferase CARMER (530 aa).

The SAM-dependent MTase PRMT-type domain occupies 141 to 450; sequence ASQYFQFYGY…QSYDVTIDLH (310 aa). S-adenosyl-L-methionine is bound by residues Q154, R163, G187, E209, E238, and T266. R501 carries the asymmetric dimethylarginine; by autocatalysis modification.

It belongs to the class I-like SAM-binding methyltransferase superfamily. Protein arginine N-methyltransferase family. Homodimer. Interacts with EcR. In terms of processing, the dimethylated protein is the major form. Present ubiquitously (at protein level). Expressed in the imaginal disks and in larval brains, and to a much lesser degree in the polytene larval tissue such as salivary glands.

It localises to the cytoplasm. It is found in the nucleus. It carries out the reaction L-arginyl-[protein] + 2 S-adenosyl-L-methionine = N(omega),N(omega)-dimethyl-L-arginyl-[protein] + 2 S-adenosyl-L-homocysteine + 2 H(+). Functionally, methylates (mono- and asymmetric dimethylation) the guanidino nitrogens of arginyl residues in proteins. May methylate histone H3 at 'Arg-17' and activate transcription via chromatin remodeling. Coordinates ecdysone-mediated expression of cell death genes. This is Probable histone-arginine methyltransferase CARMER (Art4) from Drosophila melanogaster (Fruit fly).